The sequence spans 500 residues: NAD(P)H-quinone oxidoreductase chain 4, chloroplastic (500 aa).

14 helical membrane passes run 4–24 (FPWL…IFLF), 31–51 (VIKW…TYAF), 84–104 (GFSL…TLAA), 111–129 (SRLF…IGLF), 134–154 (LLLF…LLSM), 167–187 (FILY…GIAL), 208–228 (ALEI…SPII), 242–262 (HYST…YGLV), 272–292 (AHSI…IYAA), 305–325 (IAYS…SISD), 330–350 (GAIL…FLAG), 386–406 (LALP…GIIT), 416–436 (ILIT…LLSM), and 463–483 (FVSI…DFVF).

The protein belongs to the complex I subunit 4 family.

The protein resides in the plastid. It is found in the chloroplast thylakoid membrane. The enzyme catalyses a plastoquinone + NADH + (n+1) H(+)(in) = a plastoquinol + NAD(+) + n H(+)(out). It carries out the reaction a plastoquinone + NADPH + (n+1) H(+)(in) = a plastoquinol + NADP(+) + n H(+)(out). The chain is NAD(P)H-quinone oxidoreductase chain 4, chloroplastic from Manihot esculenta (Cassava).